Consider the following 47-residue polypeptide: Delta-actitoxin-Aspp1b (47 aa).

3 cysteine pairs are disulfide-bonded: Cys-4–Cys-44, Cys-6–Cys-34, and Cys-27–Cys-45.

It belongs to the sea anemone sodium channel inhibitory toxin family. Type I subfamily.

Its subcellular location is the secreted. It localises to the nematocyst. Binds specifically to voltage-gated sodium channels (Nav), thereby delaying their inactivation during signal transduction. Has a longer mammalian heart stimulation effect than Hk2a, Hk8a and Hk16a. In Anthopleura sp. (strain 'Zhanjiang') (Sea anemone), this protein is Delta-actitoxin-Aspp1b.